We begin with the raw amino-acid sequence, 449 residues long: Exodeoxyribonuclease 7 large subunit (449 aa).

This sequence belongs to the XseA family. In terms of assembly, heterooligomer composed of large and small subunits.

The protein resides in the cytoplasm. The enzyme catalyses Exonucleolytic cleavage in either 5'- to 3'- or 3'- to 5'-direction to yield nucleoside 5'-phosphates.. Bidirectionally degrades single-stranded DNA into large acid-insoluble oligonucleotides, which are then degraded further into small acid-soluble oligonucleotides. The polypeptide is Exodeoxyribonuclease 7 large subunit (Lacticaseibacillus casei (strain BL23) (Lactobacillus casei)).